A 551-amino-acid polypeptide reads, in one-letter code: Glucans biosynthesis protein D (551 aa).

A signal peptide (tat-type signal) is located at residues 1–32 (MNRRRFIKGSMAMAAVCGSSGIASLFSQAAFA).

This sequence belongs to the OpgD/OpgG family. Post-translationally, predicted to be exported by the Tat system. The position of the signal peptide cleavage has not been experimentally proven.

The protein localises to the periplasm. The protein operates within glycan metabolism; osmoregulated periplasmic glucan (OPG) biosynthesis. Its function is as follows. Probably involved in the control of the structural glucose backbone of osmoregulated periplasmic glucans (OPGs). The sequence is that of Glucans biosynthesis protein D from Salmonella enteritidis PT4 (strain P125109).